A 360-amino-acid chain; its full sequence is uncharacterized protein (360 aa).

Residues 19–179 form the PNPLA domain; it reads LALGSGGARG…LDPLPMAPIA (161 aa). Residues 50–54 carry the GXSXG motif; the sequence is GSSMG. The Nucleophile role is filled by Ser-52. The Proton acceptor role is filled by Asp-166. A DGA/G motif is present at residues 166–168; sequence DGG. The segment at 251–282 is disordered; that stretch reads DSWSQAPEIEQRPAGPPADREEAADTPGLPKM.

This sequence belongs to the NTE family.

This is an uncharacterized protein from Mycobacterium bovis (strain ATCC BAA-935 / AF2122/97).